Here is a 364-residue protein sequence, read N- to C-terminus: MQERHTEQDYRALLIADTPIIDVRAPIEFEQGAMPAAINLPLMNNDERAAVGICYKQQGSDAALALGHKLVAGEIRQQRIDAWRAACLQNPHGILCCARGGQRSHIVQRWLHDAGIDYPLVEGGYKALRQTAIQATIELAQKPIVLIGGCTGSGKTLLVQQQPNGVDLEGLARHRGSAFGRTLQPQLSQASFENMLAAEMLKTDAHQDLRLWVLEDESRMIGSNHLPECLRERMTQATIAVVEDPFEIRLERLNEEYFLRMHHDFTHAYGDEQGWQEYCEYLHHGLSAIKRRLGLQRYNELAARLDAALTTQLTTGSTDGHLAWLVPLLEEYYDPMYRYQLEKKAEKVVFRGEWAEVAEWVKAQ.

The region spanning 14–137 is the Rhodanese domain; the sequence is LIADTPIIDV…LRQTAIQATI (124 aa). The S-selanylcysteine intermediate role is filled by Cys97.

The protein belongs to the SelU family. In terms of assembly, monomer.

The catalysed reaction is 5-methylaminomethyl-2-thiouridine(34) in tRNA + selenophosphate + (2E)-geranyl diphosphate + H2O + H(+) = 5-methylaminomethyl-2-selenouridine(34) in tRNA + (2E)-thiogeraniol + phosphate + diphosphate. It catalyses the reaction 5-methylaminomethyl-2-thiouridine(34) in tRNA + (2E)-geranyl diphosphate = 5-methylaminomethyl-S-(2E)-geranyl-thiouridine(34) in tRNA + diphosphate. It carries out the reaction 5-methylaminomethyl-S-(2E)-geranyl-thiouridine(34) in tRNA + selenophosphate + H(+) = 5-methylaminomethyl-2-(Se-phospho)selenouridine(34) in tRNA + (2E)-thiogeraniol. The enzyme catalyses 5-methylaminomethyl-2-(Se-phospho)selenouridine(34) in tRNA + H2O = 5-methylaminomethyl-2-selenouridine(34) in tRNA + phosphate. Involved in the post-transcriptional modification of the uridine at the wobble position (U34) of tRNA(Lys), tRNA(Glu) and tRNA(Gln). Catalyzes the conversion of 2-thiouridine (S2U-RNA) to 2-selenouridine (Se2U-RNA). Acts in a two-step process involving geranylation of 2-thiouridine (S2U) to S-geranyl-2-thiouridine (geS2U) and subsequent selenation of the latter derivative to 2-selenouridine (Se2U) in the tRNA chain. The sequence is that of tRNA 2-selenouridine synthase from Escherichia coli O81 (strain ED1a).